The sequence spans 196 residues: Imidazoleglycerol-phosphate dehydratase (196 aa).

The protein belongs to the imidazoleglycerol-phosphate dehydratase family.

The protein localises to the cytoplasm. The catalysed reaction is D-erythro-1-(imidazol-4-yl)glycerol 3-phosphate = 3-(imidazol-4-yl)-2-oxopropyl phosphate + H2O. It functions in the pathway amino-acid biosynthesis; L-histidine biosynthesis; L-histidine from 5-phospho-alpha-D-ribose 1-diphosphate: step 6/9. The protein is Imidazoleglycerol-phosphate dehydratase of Solidesulfovibrio magneticus (strain ATCC 700980 / DSM 13731 / RS-1) (Desulfovibrio magneticus).